Consider the following 113-residue polypeptide: MSSIIFSAKDIFEQEFGREVRGYSKVEVDEFLDDVIKDYETYAALVKSLRQEIADLKEELARKPQVSSAPSPSHPDPIDVAASSSMTNFDILKRLNRLEKEVFGKQILDNPDL.

The stretch at 36–65 (IKDYETYAALVKSLRQEIADLKEELARKPQ) forms a coiled coil. Residues 61–82 (ARKPQVSSAPSPSHPDPIDVAA) are disordered.

This sequence belongs to the GpsB family. As to quaternary structure, forms polymers through the coiled coil domains. Interacts with PBP1, MreC and EzrA.

It localises to the cytoplasm. In terms of biological role, divisome component that associates with the complex late in its assembly, after the Z-ring is formed, and is dependent on DivIC and PBP2B for its recruitment to the divisome. Together with EzrA, is a key component of the system that regulates PBP1 localization during cell cycle progression. Its main role could be the removal of PBP1 from the cell pole after pole maturation is completed. Also contributes to the recruitment of PBP1 to the division complex. Not essential for septum formation. The chain is Cell cycle protein GpsB from Streptococcus pneumoniae (strain Hungary19A-6).